Here is a 1010-residue protein sequence, read N- to C-terminus: MGAVWTVRLLCLFLLLLNTRQSAALPHNTDQCAEGSDACHIDAICQNTPTSYKCTCKTGFKGDGKHCEDIDECDVEYNGGCVHECNNIPGNYRCTCLDGFHLAHDGHNCLDVDECVFNNGGCQHVCVNTMGSYECRCKQGFFLSDNQHTCIHRSVEGLSCMNKEHGCGHICKESPKGGVACECRPGFELAKNQRGCILTCNHGNGGCQHICEDTEQGPICRCHVRYMLHADGRTCVERDEMAPTAPDHNATSLAEVDKRVKRRLLMETCAVNNGGCDSTCKDTSTGVRCSCPVGFTLQPDGKSCKDIDECELHNGGCDHYCRNTIGSFECSCRKGFKLLTDERSCQDIDECFFERTCDHTCVNSPGSFQCVCNKGYTLYGLAHCGDINECSFNNGGCEHTCENTMGSFGCHCRAGYKLHWNKKDCIEAEDSPLVPPPARPTLNCNKQGGGELCYLTCQSQVHISSGAEDSYTVTCGMPLPCHTGGQWNGSYCPGSGIKTIATFKSGQGKCNLKRSHENLAHSFKTALSDKRATENVQFSFVSLHCASSSRQQRSRHGRKAGEEEGSFITAQFELDVNLEEVTAEGCDLTCVRRRSEKRLRKTIRTLRKSINREQFHLHFAGSEYELAKKLVRPADTPDHCGTGQILLDKKCVKCSVGTYYDGEQGRCFLCPPGTYQDEEGQVSCDVCPGPEGRGIPETAGARNISECAGQCRPGQFSHDGFVPCLPCPQGTYQPEVGRTSCFTCGGSLTTKYDGSVSFQNCETKVQCSPGHYYNTSTHRCIRCPVGTYQMEFGQNYCIACPGNTTTDFDGSTNIMQCKNRHCGGELGEFTGYIESPNYPGNYPANIECTWTITPPPKRRILVVVPEIYLPIEDECGDYLVMRKSSLPNSVTTYETCQTYERPIAFTSRSKKLWIQFRSNEGNSGKGFQVPYVTYDEDYQELIEDIVRDGRLYASENHQEILKDKKLMRALFDVLAHPQNFFNYTAQESREMFPKSFIRFLRSKVLRFLRP.

Residues 1 to 24 (MGAVWTVRLLCLFLLLLNTRQSAA) form the signal peptide. The region spanning 28-68 (NTDQCAEGSDACHIDAICQNTPTSYKCTCKTGFKGDGKHCE) is the EGF-like 1; calcium-binding domain. Disulfide bonds link C32-C45, C39-C54, C56-C67, C73-C85, C81-C94, C96-C109, C115-C126, and C122-C135. The EGF-like 2; calcium-binding domain maps to 69–110 (DIDECDVEYNGGCVHECNNIPGNYRCTCLDGFHLAHDGHNCL). An EGF-like 3; calcium-binding domain is found at 111-147 (DVDECVFNNGGCQHVCVNTMGSYECRCKQGFFLSDNQ). EGF-like domains follow at residues 160-196 (CMNK…QRGC) and 200-235 (CNHG…GRTC). Residue N249 is glycosylated (N-linked (GlcNAc...) asparagine). Residues 269–304 (CAVNNGGCDSTCKDTSTGVRCSCPVGFTLQPDGKSC) form the EGF-like 6 domain. The region spanning 306 to 346 (DIDECELHNGGCDHYCRNTIGSFECSCRKGFKLLTDERSCQ) is the EGF-like 7; calcium-binding domain. Cystine bridges form between C310-C321, C317-C330, C332-C345, C351-C361, C357-C370, C372-C384, C390-C401, C397-C410, and C412-C425. The region spanning 347–385 (DIDECFFERTCDHTCVNSPGSFQCVCNKGYTLYGLAHCG) is the EGF-like 8; calcium-binding domain. The EGF-like 9; calcium-binding domain occupies 386 to 426 (DINECSFNNGGCEHTCENTMGSFGCHCRAGYKLHWNKKDCI). 4 N-linked (GlcNAc...) asparagine glycosylation sites follow: N488, N703, N774, and N803. An intrachain disulfide couples C822 to C848. A CUB domain is found at 822–934 (CGGELGEFTG…KGFQVPYVTY (113 aa)). Residues 860-869 (ILVVVPEIYL) form an interaction with the cholesterol-anchor of SHH region. Cysteines 875 and 896 form a disulfide. N982 is a glycosylation site (N-linked (GlcNAc...) asparagine).

Interacts with SHH via the cholesterol anchor of the dually lipid-modified SHH (ShhNp). Interacts with PTCH1. Forms homooligomers and heterooligomers with SCUBE1 and SCUBE3. Interacts with VEGFR2. Post-translationally, N-glycosylated.

It localises to the secreted. It is found in the cell surface. Its function is as follows. Lipid-binding protein required for SHH long-range signaling by binding to the dually lipid-modified SHH (ShhNp) and by promoting ShhNp mobilization, solubilization and release from the cell membrane. Acts by enhancing the proteolytic processing (shedding) of the lipid-modified N- and C- terminal of ShhNp at the cell surface. Synergizes with DISP1 to cause an increase in SHH secretion. Probable cell surface coreceptor for VEGFR2 involved in VEGFR2-mediated angiogenesis. This Danio rerio (Zebrafish) protein is Signal peptide, CUB and EGF-like domain-containing protein 2 (scube2).